Consider the following 241-residue polypeptide: UDP-2,3-diacylglucosamine hydrolase (241 aa).

Mn(2+)-binding residues include Asp8, His10, Asp41, Asn78, and His113. 78 to 79 (NR) provides a ligand contact to substrate. Substrate-binding residues include Asp121, Ser159, Asn163, Lys166, and His194. Residues His194 and His196 each coordinate Mn(2+).

The protein belongs to the LpxH family. Mn(2+) serves as cofactor.

It is found in the cell inner membrane. The enzyme catalyses UDP-2-N,3-O-bis[(3R)-3-hydroxytetradecanoyl]-alpha-D-glucosamine + H2O = 2-N,3-O-bis[(3R)-3-hydroxytetradecanoyl]-alpha-D-glucosaminyl 1-phosphate + UMP + 2 H(+). It functions in the pathway glycolipid biosynthesis; lipid IV(A) biosynthesis; lipid IV(A) from (3R)-3-hydroxytetradecanoyl-[acyl-carrier-protein] and UDP-N-acetyl-alpha-D-glucosamine: step 4/6. In terms of biological role, hydrolyzes the pyrophosphate bond of UDP-2,3-diacylglucosamine to yield 2,3-diacylglucosamine 1-phosphate (lipid X) and UMP by catalyzing the attack of water at the alpha-P atom. Involved in the biosynthesis of lipid A, a phosphorylated glycolipid that anchors the lipopolysaccharide to the outer membrane of the cell. The protein is UDP-2,3-diacylglucosamine hydrolase of Shewanella putrefaciens (strain CN-32 / ATCC BAA-453).